The sequence spans 575 residues: Preprotein translocase subunit SCY2, chloroplastic (575 aa).

The N-terminal 34 residues, 1-34 (MNSSQACFFHFSLRPISLSHPSYAFLSKRDPFLC), are a transit peptide targeting the chloroplast. 10 consecutive transmembrane segments (helical) span residues 157–177 (FVTAVLLVLSRVGYFIPLPGF), 206–226 (LSLFQLGLSPQIIASIIMQVL), 251–271 (IWWLSFFFAIVEALVVAYTSL), 285–305 (VMMTSSLLVCGAMTMTWLCDT), 306–326 (ISESGFGHGSSLIICVGILTG), 346–366 (LPYLLGLLGIFTVVTMFAVVV), 414–434 (TTYLLAFPSILASILGSPFLL), 447–467 (GAPPWVYYSIYAFFVFLFNIF), 509–529 (FWGGLLLSFLATASTVLDHYL), and 531–551 (SINQGFSIGFTSVLIIVGSII).

It belongs to the SecY/SEC61-alpha family. As to quaternary structure, part of a second Sec protein translocation apparatus. Interacts probably with SECA2. In terms of tissue distribution, ubiquitous.

Its subcellular location is the plastid. The protein resides in the chloroplast membrane. The protein localises to the amyloplast membrane. It is found in the chloroplast thylakoid membrane. Its function is as follows. Involved in protein export. Probably interacts with other proteins to allow the postimport or conservative sorting pathway for inner membrane proteins in plastids. Central subunit of the protein translocation channel SecYE. Consists of two halves formed by TMs 1-5 and 6-10. These two domains form a lateral gate at the front which open onto the bilayer between TMs 2 and 7, and are clamped together by SecE at the back. The channel is closed by both a pore ring composed of hydrophobic SecY resides and a short helix (helix 2A) on the extracellular side of the membrane which forms a plug. The polypeptide is Preprotein translocase subunit SCY2, chloroplastic (SCY2) (Arabidopsis thaliana (Mouse-ear cress)).